Here is a 212-residue protein sequence, read N- to C-terminus: Large ribosomal subunit protein uL3 (212 aa).

Residues 130–158 (KRGSMTHGSKNHRLPGSTGAGTTPGRVYP) are disordered.

Belongs to the universal ribosomal protein uL3 family. Part of the 50S ribosomal subunit. Forms a cluster with proteins L14 and L19.

In terms of biological role, one of the primary rRNA binding proteins, it binds directly near the 3'-end of the 23S rRNA, where it nucleates assembly of the 50S subunit. The polypeptide is Large ribosomal subunit protein uL3 (Gloeothece citriformis (strain PCC 7424) (Cyanothece sp. (strain PCC 7424))).